The chain runs to 205 residues: uncharacterized protein (205 aa).

At 1-63 (MQRTRELESS…QHPKVAKFLK (63 aa)) the chain is on the cytoplasmic side. The helical transmembrane segment at 64 to 84 (VQLVFDLISLFIFATHQLLLL) threads the bilayer. Topologically, residues 85–124 (EDGNFGKHYFKRKTKRCSKFSCSRCNANAHHPKWFKFKHS) are extracellular. Residues 125–145 (LLCLGTFCFGVYSLVKINKFF) form a helical membrane-spanning segment. The Cytoplasmic segment spans residues 146–205 (KTDQTVDLNRLLELFFWQLNAILNMKLFAFYGDHLESHSAPLDVYEDSFANKSSSGGDEV).

It localises to the membrane. This is an uncharacterized protein from Saccharomyces cerevisiae (strain ATCC 204508 / S288c) (Baker's yeast).